Consider the following 367-residue polypeptide: 4-hydroxy-3-methylbut-2-en-1-yl diphosphate synthase (flavodoxin) (367 aa).

Residues Cys-268, Cys-271, Cys-303, and Glu-310 each contribute to the [4Fe-4S] cluster site.

The protein belongs to the IspG family. [4Fe-4S] cluster is required as a cofactor.

It carries out the reaction (2E)-4-hydroxy-3-methylbut-2-enyl diphosphate + oxidized [flavodoxin] + H2O + 2 H(+) = 2-C-methyl-D-erythritol 2,4-cyclic diphosphate + reduced [flavodoxin]. The protein operates within isoprenoid biosynthesis; isopentenyl diphosphate biosynthesis via DXP pathway; isopentenyl diphosphate from 1-deoxy-D-xylulose 5-phosphate: step 5/6. In terms of biological role, converts 2C-methyl-D-erythritol 2,4-cyclodiphosphate (ME-2,4cPP) into 1-hydroxy-2-methyl-2-(E)-butenyl 4-diphosphate. This Shouchella clausii (strain KSM-K16) (Alkalihalobacillus clausii) protein is 4-hydroxy-3-methylbut-2-en-1-yl diphosphate synthase (flavodoxin).